Reading from the N-terminus, the 244-residue chain is 1-(5-phosphoribosyl)-5-[(5-phosphoribosylamino)methylideneamino] imidazole-4-carboxamide isomerase (244 aa).

The Proton acceptor role is filled by D10. D129 acts as the Proton donor in catalysis.

It belongs to the HisA/HisF family.

The protein localises to the cytoplasm. The enzyme catalyses 1-(5-phospho-beta-D-ribosyl)-5-[(5-phospho-beta-D-ribosylamino)methylideneamino]imidazole-4-carboxamide = 5-[(5-phospho-1-deoxy-D-ribulos-1-ylimino)methylamino]-1-(5-phospho-beta-D-ribosyl)imidazole-4-carboxamide. The protein operates within amino-acid biosynthesis; L-histidine biosynthesis; L-histidine from 5-phospho-alpha-D-ribose 1-diphosphate: step 4/9. This is 1-(5-phosphoribosyl)-5-[(5-phosphoribosylamino)methylideneamino] imidazole-4-carboxamide isomerase from Rhodococcus erythropolis (strain PR4 / NBRC 100887).